Here is a 253-residue protein sequence, read N- to C-terminus: MSAYGHGRHEHGQNFLTNHKIINSIIDLVKQTSGPIIEIGPGSGALTHPMAHLGRAITAVEVDAKLAAKITQETSSAAVEVVHDDFLNFRLPATPCVIVGNIPFHLTTAILRKLLHAPAWTDAVLLMQWEVARRRAGVGASTMMTAQWSPWFTFHLGSRVPRSAFRPQPNVDGGILVIRRVGDPKIPIEQRKAFQAMVHTVFTARGRGIGEILRRQGCFHHVQKHNHGCAREESTPRPYLPDCTPTTGSISSR.

S-adenosyl-L-methionine is bound by residues Asn-14, Leu-16, Gly-40, Glu-61, Asp-85, and Asn-101. Residues 229 to 253 (CAREESTPRPYLPDCTPTTGSISSR) form a disordered region. A compositionally biased stretch (polar residues) spans 244–253 (TPTTGSISSR).

Belongs to the class I-like SAM-binding methyltransferase superfamily. rRNA adenine N(6)-methyltransferase family.

In terms of biological role, involved in erythromycin resistance. In Corynebacterium diphtheriae, this protein is rRNA adenine N-6-methyltransferase (ermA).